Here is a 255-residue protein sequence, read N- to C-terminus: Zinc finger CCCH domain-containing protein 37 (255 aa).

2 C3H1-type zinc fingers span residues 98–128 and 137–159; these read AYTG…HGTF and YRTR…AHTA.

This chain is Zinc finger CCCH domain-containing protein 37, found in Oryza sativa subsp. japonica (Rice).